Consider the following 567-residue polypeptide: Glucose-6-phosphate isomerase, cytosolic A (567 aa).

Residues 156 to 157, 212 to 217, Gln356, Glu360, His391, and Lys516 contribute to the D-glucose 6-phosphate site; these read GS and SKTFTT. Glu360 serves as the catalytic Proton donor. Catalysis depends on residues His391 and Lys516.

This sequence belongs to the GPI family. Homodimer.

It is found in the cytoplasm. The enzyme catalyses alpha-D-glucose 6-phosphate = beta-D-fructose 6-phosphate. It functions in the pathway carbohydrate degradation; glycolysis; D-glyceraldehyde 3-phosphate and glycerone phosphate from D-glucose: step 2/4. Its function is as follows. Catalyzes the conversion of glucose-6-phosphate to fructose-6-phosphate, the second step in glycolysis, and the reverse reaction during gluconeogenesis. This Oryza sativa subsp. japonica (Rice) protein is Glucose-6-phosphate isomerase, cytosolic A.